A 581-amino-acid polypeptide reads, in one-letter code: Tricyclene synthase Oc15, chloroplastic (581 aa).

The transit peptide at 1–68 directs the protein to the chloroplast; sequence MAFCISYVGA…ALCLNEHSLS (68 aa). N-linked (GlcNAc...) asparagine glycans are attached at residues Asn-27, Asn-206, and Asn-319. Asp-338 and Asp-342 together coordinate Mg(2+). The DDXXD motif motif lies at 338-342; it reads DDIFD. Residues Asn-384 and Asn-465 are each glycosylated (N-linked (GlcNAc...) asparagine). Mg(2+) is bound by residues Asn-482, Ser-486, and Glu-490. N-linked (GlcNAc...) asparagine glycosylation is present at Asn-509.

The protein belongs to the terpene synthase family. Tpsg subfamily. Requires Mg(2+) as cofactor. Mn(2+) serves as cofactor. Accumulates in flowers; mostly expressed in both upper and lower petal lobes, and, to a lower extent, in tube and stamens.

The protein localises to the plastid. It localises to the chloroplast stroma. The catalysed reaction is (2E)-geranyl diphosphate = tricyclene + diphosphate. It carries out the reaction (2E)-geranyl diphosphate = beta-myrcene + diphosphate. It functions in the pathway secondary metabolite biosynthesis; terpenoid biosynthesis. Its function is as follows. Contributes to floral scent emission. In Antirrhinum majus (Garden snapdragon), this protein is Tricyclene synthase Oc15, chloroplastic (Oc15).